The following is a 285-amino-acid chain: Bifunctional protein FolD (285 aa).

NADP(+) contacts are provided by residues 165 to 167 (GRS) and Ser-190.

It belongs to the tetrahydrofolate dehydrogenase/cyclohydrolase family. Homodimer.

It carries out the reaction (6R)-5,10-methylene-5,6,7,8-tetrahydrofolate + NADP(+) = (6R)-5,10-methenyltetrahydrofolate + NADPH. The enzyme catalyses (6R)-5,10-methenyltetrahydrofolate + H2O = (6R)-10-formyltetrahydrofolate + H(+). The protein operates within one-carbon metabolism; tetrahydrofolate interconversion. Its function is as follows. Catalyzes the oxidation of 5,10-methylenetetrahydrofolate to 5,10-methenyltetrahydrofolate and then the hydrolysis of 5,10-methenyltetrahydrofolate to 10-formyltetrahydrofolate. This Staphylococcus saprophyticus subsp. saprophyticus (strain ATCC 15305 / DSM 20229 / NCIMB 8711 / NCTC 7292 / S-41) protein is Bifunctional protein FolD.